A 70-amino-acid chain; its full sequence is Ubiquinol-cytochrome c reductase complex assembly factor 5 (70 aa).

Over 1-19 (MFTRAQVRRILQRVPGKQR) the chain is Mitochondrial matrix. Residues 20–41 (FGIYRFLPFFFVLGGTMEWIMI) traverse the membrane as a helical segment. Residues 42 to 70 (KVRVGQETFYDVYRRKASERQYQRRLEDE) are Mitochondrial intermembrane-facing.

Belongs to the UQCC5 family. In terms of assembly, associates with the mitochondrial ribosome. Interacts with UQCC6. Interacts with MT-CYB; interacts with newly synthesizes MT-CYB. Forms a complex, named COMB/coordinator of mitochondrial CYTB biogenesis, composed of UQCC1, UQCC2, UQCC4, UQCC5 and UQCC6; regulates MT-CYB synthesis and promotes its membrane insertion.

It localises to the mitochondrion inner membrane. Its function is as follows. Required for the assembly and stability of the mitochondrial ubiquinol-cytochrome c reductase complex (complex III (CIII) or cytochrome b-c1 complex), a multisubunit transmembrane complex that is part of the mitochondrial electron transport chain (ETC) which drives oxidative phosphorylation. Mediates early complex III biogenesis. Participates in regulating the levels of electron transport chain proteins, and therefore energy supply, in response to changes in energy demand. Also involved in the first steps of cytochrome c oxidase complex (complex IV) assembly. The chain is Ubiquinol-cytochrome c reductase complex assembly factor 5 from Homo sapiens (Human).